Consider the following 204-residue polypeptide: Large ribosomal subunit protein uL4 (204 aa).

Positions 44–76 are disordered; it reads KRQGTQSAKTRSEVRGGGIKPWRQKGTGRARQG.

This sequence belongs to the universal ribosomal protein uL4 family. Part of the 50S ribosomal subunit.

One of the primary rRNA binding proteins, this protein initially binds near the 5'-end of the 23S rRNA. It is important during the early stages of 50S assembly. It makes multiple contacts with different domains of the 23S rRNA in the assembled 50S subunit and ribosome. In terms of biological role, forms part of the polypeptide exit tunnel. The sequence is that of Large ribosomal subunit protein uL4 from Clostridium perfringens (strain ATCC 13124 / DSM 756 / JCM 1290 / NCIMB 6125 / NCTC 8237 / Type A).